A 255-amino-acid polypeptide reads, in one-letter code: 14-3-3 protein epsilon (255 aa).

Residue methionine 1 is modified to N-acetylmethionine. At lysine 50 the chain carries N6-acetyllysine; alternate. Lysine 50 is covalently cross-linked (Glycyl lysine isopeptide (Lys-Gly) (interchain with G-Cter in SUMO2); alternate). At serine 65 the chain carries Phosphoserine. Residues lysine 69, lysine 118, and lysine 123 each carry the N6-acetyllysine modification. Tyrosine 131 carries the phosphotyrosine modification. Threonine 137 is subject to Phosphothreonine. Serine 210 is modified (phosphoserine). A Phosphothreonine modification is found at threonine 232. Positions 234 to 255 are disordered; sequence DMQGDGEEQNKEALQDVEDENQ.

The protein belongs to the 14-3-3 family. In terms of assembly, homodimer. Heterodimerizes with YWHAZ. Interacts with PKA-phosphorylated AANAT. Interacts with ABL1 (phosphorylated form); the interaction retains it in the cytoplasm. Interacts with ARHGEF28. Interacts with BEX3. Weakly interacts with CDKN1B. Interacts with the 'Thr-369' phosphorylated form of DAPK2. Interacts with DENND1A. Interacts with GAB2. Interacts with phosphorylated GRB10. Interacts with KSR1. Interacts with NDEL1. Interacts with PI4KB, TBC1D22A and TBC1D22B. Interacts with the phosphorylated (by AKT1) form of SRPK2. Interacts with TIAM2. Interacts with the 'Ser-1134' and 'Ser-1161' phosphorylated form of SOS1. Interacts with ZFP36 (via phosphorylated form). Interacts with SLITRK1. Interacts with HSF1 (via phosphorylated form); this interaction promotes HSF1 sequestration in the cytoplasm in a ERK-dependent manner. Interacts with RIPOR2. Interacts with KLHL22; required for the nuclear localization of KLHL22 upon amino acid starvation. Interacts with CRTC1. Interacts with CRTC2 (probably when phosphorylated at 'Ser-171'). Interacts with CRTC3 (probably when phosphorylated at 'Ser-162' and/or 'Ser-273'). Interacts with ATP2B1 and ATP2B3; this interaction inhibits calcium-transporting ATPase activity. Interacts with MEFV. Interacts with RNF115. Interacts with GPR15; this interaction promotes ER-to-Golgi transport of GPR15.

It localises to the nucleus. The protein localises to the cytoplasm. The protein resides in the melanosome. In terms of biological role, adapter protein implicated in the regulation of a large spectrum of both general and specialized signaling pathways. Binds to a large number of partners, usually by recognition of a phosphoserine or phosphothreonine motif. Binding generally results in the modulation of the activity of the binding partner. Positively regulates phosphorylated protein HSF1 nuclear export to the cytoplasm. In Rattus norvegicus (Rat), this protein is 14-3-3 protein epsilon (Ywhae).